We begin with the raw amino-acid sequence, 143 residues long: Nucleoside diphosphate kinase (143 aa).

ATP contacts are provided by lysine 11, phenylalanine 59, arginine 87, threonine 93, arginine 104, and asparagine 114. Histidine 117 serves as the catalytic Pros-phosphohistidine intermediate.

The protein belongs to the NDK family. As to quaternary structure, homotetramer. Requires Mg(2+) as cofactor.

Its subcellular location is the cytoplasm. It catalyses the reaction a 2'-deoxyribonucleoside 5'-diphosphate + ATP = a 2'-deoxyribonucleoside 5'-triphosphate + ADP. It carries out the reaction a ribonucleoside 5'-diphosphate + ATP = a ribonucleoside 5'-triphosphate + ADP. Major role in the synthesis of nucleoside triphosphates other than ATP. The ATP gamma phosphate is transferred to the NDP beta phosphate via a ping-pong mechanism, using a phosphorylated active-site intermediate. This chain is Nucleoside diphosphate kinase, found in Stutzerimonas stutzeri (strain A1501) (Pseudomonas stutzeri).